The following is a 314-amino-acid chain: Homoserine O-acetyltransferase (314 aa).

Residue cysteine 142 is the Acyl-thioester intermediate of the active site. 2 residues coordinate substrate: lysine 163 and serine 192. Catalysis depends on histidine 235, which acts as the Proton acceptor. Glutamate 237 is a catalytic residue. Substrate is bound at residue arginine 249.

This sequence belongs to the MetA family.

It is found in the cytoplasm. The enzyme catalyses L-homoserine + acetyl-CoA = O-acetyl-L-homoserine + CoA. It participates in amino-acid biosynthesis; L-methionine biosynthesis via de novo pathway; O-acetyl-L-homoserine from L-homoserine: step 1/1. Its function is as follows. Transfers an acetyl group from acetyl-CoA to L-homoserine, forming acetyl-L-homoserine. The protein is Homoserine O-acetyltransferase of Streptococcus thermophilus (strain ATCC BAA-491 / LMD-9).